Here is a 295-residue protein sequence, read N- to C-terminus: Acetylglutamate kinase (295 aa).

Substrate-binding positions include 66-67 (GG), R88, and N193.

The protein belongs to the acetylglutamate kinase family. ArgB subfamily.

It localises to the cytoplasm. It carries out the reaction N-acetyl-L-glutamate + ATP = N-acetyl-L-glutamyl 5-phosphate + ADP. It participates in amino-acid biosynthesis; L-arginine biosynthesis; N(2)-acetyl-L-ornithine from L-glutamate: step 2/4. In terms of biological role, catalyzes the ATP-dependent phosphorylation of N-acetyl-L-glutamate. The polypeptide is Acetylglutamate kinase (Rhizobium johnstonii (strain DSM 114642 / LMG 32736 / 3841) (Rhizobium leguminosarum bv. viciae)).